A 230-amino-acid chain; its full sequence is Ribonuclease 3 (230 aa).

The region spanning 5–125 (YSRFYNILGY…VIGAIYLDSD (121 aa)) is the RNase III domain. E40 contacts Mg(2+). Residue D44 is part of the active site. Mg(2+) contacts are provided by D111 and E114. The active site involves E114. Residues 153–223 (DSKSKLQEIL…AEKMIEMLSQ (71 aa)) enclose the DRBM domain.

It belongs to the ribonuclease III family. Homodimer. Mg(2+) serves as cofactor.

The protein resides in the cytoplasm. The catalysed reaction is Endonucleolytic cleavage to 5'-phosphomonoester.. In terms of biological role, digests double-stranded RNA. Involved in the processing of primary rRNA transcript to yield the immediate precursors to the large and small rRNAs (23S and 16S). Also processes some mRNAs, and tRNAs when they are encoded in the rRNA operon. CRISPR (clustered regularly interspaced short palindromic repeat) is an adaptive immune system that provides protection against mobile genetic elements (viruses, transposable elements and conjugative plasmids). CRISPR clusters contain spacers, sequences complementary to antecedent mobile elements, and target invading nucleic acids. CRISPR clusters are transcribed and processed into CRISPR RNA (crRNA). In this organism endogenous ribonuclease 3 and Cas9 are required for correct coprocessing of pre-crRNA and the trans-encoded small RNA (tracrRNA). Cas9, crRNA and tracrRNA are required for cleavage of invading DNA. Complements pre-crRNA and tracrRNA coprocessing defects in an rnc deletion in S.pyogenes strain 370. The polypeptide is Ribonuclease 3 (Francisella tularensis subsp. novicida (strain U112)).